Consider the following 2513-residue polypeptide: Probable polyketide synthase 7 (2513 aa).

The Ketosynthase family 3 (KS3) domain maps to 11-441 (EKGVAIVGIG…GSNCCLLISE (431 aa)). Residues C181, H323, and H362 each act as for beta-ketoacyl synthase activity in the active site. Residues 632-665 (GVNPSFILGHSLGEISASYCSGMIDLDTFCYTVY) are acyl/malonyl transferase. Catalysis depends on S642, which acts as the For acyl/malonyl transferase activity. The interval 922–1044 (IDHLGISNSF…SNFQLLDHGN (123 aa)) is N-terminal hotdog fold. Residues 922–1206 (IDHLGISNSF…CKSLIPIKDS (285 aa)) enclose the PKS/mFAS DH domain. H956 acts as the Proton acceptor; for dehydratase activity in catalysis. Residues 1061–1206 (NLSKLTKNEL…CKSLIPIKDS (146 aa)) are C-terminal hotdog fold. The Proton donor; for dehydratase activity role is filled by D1119. The 78-residue stretch at 2426-2503 (IGNKNIDELF…ISIKMILNSL (78 aa)) folds into the Carrier domain. At S2463 the chain carries O-(pantetheine 4'-phosphoryl)serine.

The cofactor is pantetheine 4'-phosphate.

In terms of biological role, probable polyketide synthase. The polypeptide is Probable polyketide synthase 7 (pks7) (Dictyostelium discoideum (Social amoeba)).